The primary structure comprises 1577 residues: Dynamin-binding protein (1577 aa).

At methionine 1 the chain carries N-acetylmethionine. 3 SH3 domains span residues glutamate 2–isoleucine 61, glutamate 66–leucine 126, and tyrosine 145–proline 204. Residues aspartate 209–glutamine 242 form a disordered region. The segment covering threonine 221 to glutamine 242 has biased composition (acidic residues). Residues glutamine 243–serine 302 enclose the SH3 4 domain. Disordered stretches follow at residues glutamate 307–leucine 361 and glycine 375–cysteine 437. The span at proline 400–serine 410 shows a compositional bias: polar residues. Serine 494 is modified (phosphoserine). Disordered regions lie at residues proline 519–aspartate 547 and arginine 590–threonine 681. A compositionally biased stretch (low complexity) spans threonine 617 to leucine 626. Positions lysine 632–threonine 651 are enriched in pro residues. Over residues glutamine 652 to proline 662 the composition is skewed to polar residues. Residues alanine 672–threonine 681 are compositionally biased toward basic and acidic residues. Serine 684 bears the Phosphoserine mark. Residues leucine 705–methionine 755 adopt a coiled-coil conformation. Positions lysine 784 to tyrosine 967 constitute a DH domain. Residues leucine 1008–leucine 1217 enclose the BAR domain. The 64-residue stretch at proline 1285–proline 1348 folds into the SH3 5 domain. Residues serine 1353–histidine 1375 show a composition bias toward low complexity. Disordered regions lie at residues serine 1353 to serine 1381 and glutamate 1415 to serine 1510. Composition is skewed to polar residues over residues glycine 1418–threonine 1428 and aspartate 1484–cysteine 1497. Positions glutamate 1513 to tyrosine 1576 constitute an SH3 6 domain.

Binds DNM1 via its N-terminal SH3 domains. The C-terminal SH3 domain binds a complex containing actin, tubulin, Hsp70 and actin-regulatory proteins, such as ENAH, EVL, WIRE, CR16, WAVE1 and NAP1L1. Interacts with FASLG. Interacts (via SH3 domain 6) with WASL. Interacts (via SH3 domain 6) interacts with ENAH. Interacts (via C-terminal domain) with TJP1; required for the apical cell-cell junction localization of DNMBP. Widely expressed.

The protein localises to the cytoplasm. It is found in the golgi apparatus. The protein resides in the golgi stack. It localises to the cytoskeleton. Its subcellular location is the synapse. The protein localises to the cell junction. Functionally, plays a critical role as a guanine nucleotide exchange factor (GEF) for CDC42 in several intracellular processes associated with the actin and microtubule cytoskeleton. Regulates the structure of apical junctions in epithelial cells. Participates in the normal lumenogenesis of epithelial cell cysts by regulating spindle orientation. Plays a role in ciliogenesis. May play a role in membrane trafficking between the cell surface and the Golgi. This Rattus norvegicus (Rat) protein is Dynamin-binding protein.